The following is a 608-amino-acid chain: Glutamine--fructose-6-phosphate aminotransferase [isomerizing] (608 aa).

Cys2 acts as the Nucleophile; for GATase activity in catalysis. Positions 2 to 217 (CGIVGIVGNQ…DGDWAVIGKT (216 aa)) constitute a Glutamine amidotransferase type-2 domain. SIS domains are found at residues 281-422 (ISDA…ARGT) and 456-598 (LSRE…VDQP). Lys603 acts as the For Fru-6P isomerization activity in catalysis.

The protein resides in the cytoplasm. It carries out the reaction D-fructose 6-phosphate + L-glutamine = D-glucosamine 6-phosphate + L-glutamate. Its function is as follows. Involved in the production of the root hair deformation (HAD) factor specifically on medicago. This Rhizobium meliloti (strain 1021) (Ensifer meliloti) protein is Glutamine--fructose-6-phosphate aminotransferase [isomerizing] (nodM).